Here is a 192-residue protein sequence, read N- to C-terminus: Adenylate kinase (192 aa).

Residue 11-16 (GSGKGT) participates in ATP binding. Residues 31–60 (STGDIFRANVKGETPLGIEAKKYMDNGDFV) form an NMP region. AMP-binding positions include threonine 32, arginine 37, 58–60 (DFV), 86–89 (GYPR), and glutamine 93. The segment at 127 to 137 (GRAKETGRSDD) is LID. Arginine 128 provides a ligand contact to ATP. AMP is bound by residues arginine 134 and arginine 145. Residue glycine 173 participates in ATP binding.

The protein belongs to the adenylate kinase family. Monomer.

The protein resides in the cytoplasm. The catalysed reaction is AMP + ATP = 2 ADP. It participates in purine metabolism; AMP biosynthesis via salvage pathway; AMP from ADP: step 1/1. Its function is as follows. Catalyzes the reversible transfer of the terminal phosphate group between ATP and AMP. Plays an important role in cellular energy homeostasis and in adenine nucleotide metabolism. This is Adenylate kinase from Pseudarthrobacter chlorophenolicus (strain ATCC 700700 / DSM 12829 / CIP 107037 / JCM 12360 / KCTC 9906 / NCIMB 13794 / A6) (Arthrobacter chlorophenolicus).